The chain runs to 324 residues: Probable uridine nucleosidase 1 (324 aa).

Histidine 248 is an active-site residue.

The protein belongs to the IUNH family.

The protein localises to the cytoplasm. It catalyses the reaction uridine + H2O = D-ribose + uracil. Functionally, involved in pyrimidine breakdown. The sequence is that of Probable uridine nucleosidase 1 (URH1) from Oryza sativa subsp. japonica (Rice).